The sequence spans 634 residues: Chaperone protein HtpG (634 aa).

An a; substrate-binding region spans residues 1 to 345 (MEHQQNHTFS…SNDLPLNVSR (345 aa)). The b stretch occupies residues 346 to 562 (EILQDTRVTA…NDDMSTQMAK (217 aa)). A c region spans residues 563-634 (LMAQMGQPVP…VGRINKLLLA (72 aa)).

The protein belongs to the heat shock protein 90 family. In terms of assembly, homodimer.

The protein resides in the cytoplasm. Functionally, molecular chaperone. Has ATPase activity. In Psychromonas ingrahamii (strain DSM 17664 / CCUG 51855 / 37), this protein is Chaperone protein HtpG.